A 528-amino-acid chain; its full sequence is Purine-cytosine permease FCY21 (528 aa).

The Cytoplasmic portion of the chain corresponds to Met-1–Met-90. Phosphoserine is present on Ser-43. Position 46 is a phosphothreonine (Thr-46). A helical transmembrane segment spans residues Trp-91–Phe-111. Over Asp-112–Ser-118 the chain is Extracellular. Residues Val-119–Phe-139 form a helical membrane-spanning segment. Topologically, residues Gly-140–Arg-161 are cytoplasmic. Residues Ile-162–Ser-182 traverse the membrane as a helical segment. Residues Ser-183 to Trp-198 are Extracellular-facing. A helical membrane pass occupies residues Ala-199 to Ile-219. The Cytoplasmic segment spans residues His-220–Ala-221. Residues Tyr-222–Ala-242 traverse the membrane as a helical segment. Over Arg-243–Gly-260 the chain is Extracellular. A helical membrane pass occupies residues Asn-261–Ala-281. At Asp-282 to Lys-295 the chain is on the cytoplasmic side. The helical transmembrane segment at Ile-296–Ala-316 threads the bilayer. At Ala-317–Leu-340 the chain is on the extracellular side. The chain crosses the membrane as a helical span at residues Thr-341–Leu-361. At Ser-362–Val-393 the chain is on the cytoplasmic side. The helical transmembrane segment at Ile-394 to Phe-414 threads the bilayer. The Extracellular segment spans residues Ser-415–Thr-416. The helical transmembrane segment at Phe-417 to Cys-437 threads the bilayer. Over Ser-438–Arg-460 the chain is Cytoplasmic. The chain crosses the membrane as a helical span at residues Leu-461–Gly-481. Residues Met-482–Arg-493 are Extracellular-facing. Residues Leu-494–Val-514 form a helical membrane-spanning segment. Residues Tyr-515 to Arg-528 are Cytoplasmic-facing.

This sequence belongs to the purine-cytosine permease (2.A.39) family.

It localises to the membrane. Functionally, probable purine-cytosine permease. The protein is Purine-cytosine permease FCY21 (FCY21) of Saccharomyces cerevisiae (strain ATCC 204508 / S288c) (Baker's yeast).